Here is a 147-residue protein sequence, read N- to C-terminus: Ribosomal RNA large subunit methyltransferase H (147 aa).

S-adenosyl-L-methionine contacts are provided by residues Leu64, Gly96, and 115 to 120 (FSKMTF).

It belongs to the RNA methyltransferase RlmH family. Homodimer.

Its subcellular location is the cytoplasm. The catalysed reaction is pseudouridine(1915) in 23S rRNA + S-adenosyl-L-methionine = N(3)-methylpseudouridine(1915) in 23S rRNA + S-adenosyl-L-homocysteine + H(+). Functionally, specifically methylates the pseudouridine at position 1915 (m3Psi1915) in 23S rRNA. The chain is Ribosomal RNA large subunit methyltransferase H from Acholeplasma laidlawii (strain PG-8A).